Reading from the N-terminus, the 310-residue chain is Formyltetrahydrofolate deformylase (310 aa).

Residues methionine 1–isoleucine 30 form a disordered region. The span at proline 15–alanine 28 shows a compositional bias: pro residues. Positions arginine 32–arginine 108 constitute an ACT domain. Residue aspartate 255 is part of the active site.

The protein belongs to the PurU family.

The enzyme catalyses (6R)-10-formyltetrahydrofolate + H2O = (6S)-5,6,7,8-tetrahydrofolate + formate + H(+). It participates in purine metabolism; IMP biosynthesis via de novo pathway; formate from 10-formyl-5,6,7,8-tetrahydrofolate: step 1/1. In terms of biological role, catalyzes the hydrolysis of 10-formyltetrahydrofolate (formyl-FH4) to formate and tetrahydrofolate (FH4). This is Formyltetrahydrofolate deformylase from Mycobacterium bovis (strain ATCC BAA-935 / AF2122/97).